The primary structure comprises 163 residues: Norbelladine synthase (163 aa).

68 to 71 (YHKE) lines the tyramine pocket. Residue K83 is the Proton donor of the active site.

It belongs to the BetVI family. In terms of tissue distribution, mostly expressed in bulbs, and, to a lower extent, in roots, stems, leaves and flowers.

It carries out the reaction 3,4-dihydroxybenzaldehyde + tyramine + AH2 = norbelladine + A + H2O. It functions in the pathway alkaloid biosynthesis. Catalyzes the condensation of tyramine and 3,4-dihydroxybenzaldehyde (3,4-DHBA) to form norbelladine, the common precursor to all Amaryllidaceae alkaloids such as galanthamine, lycorine and haemanthamine, and including haemanthamine- and crinamine-type alkaloids, promising anticancer agents. The chain is Norbelladine synthase from Narcissus pseudonarcissus (Daffodil).